The sequence spans 546 residues: Probable protein kinase UbiB (546 aa).

Residues 124-502 (DFSVEPLASA…HVRQGQSRYL (379 aa)) enclose the Protein kinase domain. Residues 130 to 138 (LASASIAQV) and Lys-153 each bind ATP. The Proton acceptor role is filled by Asp-288. Transmembrane regions (helical) follow at residues 501-521 (YLFG…IHRP) and 522-542 (EWGM…LIGW).

The protein belongs to the ABC1 family. UbiB subfamily.

The protein localises to the cell inner membrane. The protein operates within cofactor biosynthesis; ubiquinone biosynthesis [regulation]. Its function is as follows. Is probably a protein kinase regulator of UbiI activity which is involved in aerobic coenzyme Q (ubiquinone) biosynthesis. This chain is Probable protein kinase UbiB, found in Klebsiella pneumoniae (strain 342).